A 168-amino-acid chain; its full sequence is Dual-action ribosomal maturation protein DarP (168 aa).

Belongs to the DarP family.

Its subcellular location is the cytoplasm. In terms of biological role, member of a network of 50S ribosomal subunit biogenesis factors which assembles along the 30S-50S interface, preventing incorrect 23S rRNA structures from forming. Promotes peptidyl transferase center (PTC) maturation. In Neisseria meningitidis serogroup B (strain ATCC BAA-335 / MC58), this protein is Dual-action ribosomal maturation protein DarP.